The sequence spans 206 residues: ATP synthase subunit b (206 aa).

Residues 14–34 traverse the membrane as a helical segment; it reads VMMPAAVCAAVIGLSALGFAA.

It belongs to the ATPase B chain family. In terms of assembly, F-type ATPases have 2 components, F(1) - the catalytic core - and F(0) - the membrane proton channel. F(1) has five subunits: alpha(3), beta(3), gamma(1), delta(1), epsilon(1). F(0) has three main subunits: a(1), b(2) and c(10-14). The alpha and beta chains form an alternating ring which encloses part of the gamma chain. F(1) is attached to F(0) by a central stalk formed by the gamma and epsilon chains, while a peripheral stalk is formed by the delta and b chains.

Its subcellular location is the cell inner membrane. Its function is as follows. F(1)F(0) ATP synthase produces ATP from ADP in the presence of a proton or sodium gradient. F-type ATPases consist of two structural domains, F(1) containing the extramembraneous catalytic core and F(0) containing the membrane proton channel, linked together by a central stalk and a peripheral stalk. During catalysis, ATP synthesis in the catalytic domain of F(1) is coupled via a rotary mechanism of the central stalk subunits to proton translocation. In terms of biological role, component of the F(0) channel, it forms part of the peripheral stalk, linking F(1) to F(0). In Geobacter metallireducens (strain ATCC 53774 / DSM 7210 / GS-15), this protein is ATP synthase subunit b.